The chain runs to 623 residues: Mu-like prophage FluMu defective tail fiber protein (623 aa).

The protein to phage Mu protein S.

The chain is Mu-like prophage FluMu defective tail fiber protein from Haemophilus influenzae (strain ATCC 51907 / DSM 11121 / KW20 / Rd).